A 693-amino-acid chain; its full sequence is Translation factor GUF1 homolog, mitochondrial (693 aa).

Polar residues predominate over residues 51–63 (SSSSTEKPTTSGT). The disordered stretch occupies residues 51–78 (SSSSTEKPTTSGTINGGGGKQKAASQPK). The 183-residue stretch at 88–270 (QKIRNFSIIA…RIVQMVPPPP (183 aa)) folds into the tr-type G domain. Residues 97-104 (AHIDHGKS), 163-167 (DTPGH), and 217-220 (NKID) contribute to the GTP site.

Belongs to the TRAFAC class translation factor GTPase superfamily. Classic translation factor GTPase family. LepA subfamily.

Its subcellular location is the mitochondrion inner membrane. It carries out the reaction GTP + H2O = GDP + phosphate + H(+). Promotes mitochondrial protein synthesis. May act as a fidelity factor of the translation reaction, by catalyzing a one-codon backward translocation of tRNAs on improperly translocated ribosomes. Binds to mitochondrial ribosomes in a GTP-dependent manner. The chain is Translation factor GUF1 homolog, mitochondrial from Phaeodactylum tricornutum (strain CCAP 1055/1).